The primary structure comprises 418 residues: Serine hydroxymethyltransferase 2 (418 aa).

Residues leucine 121 and 125 to 127 contribute to the (6S)-5,6,7,8-tetrahydrofolate site; that span reads GHL. Lysine 230 is modified (N6-(pyridoxal phosphate)lysine). 355 to 357 contributes to the (6S)-5,6,7,8-tetrahydrofolate binding site; sequence SPF.

The protein belongs to the SHMT family. Homodimer. Pyridoxal 5'-phosphate is required as a cofactor.

Its subcellular location is the cytoplasm. The catalysed reaction is (6R)-5,10-methylene-5,6,7,8-tetrahydrofolate + glycine + H2O = (6S)-5,6,7,8-tetrahydrofolate + L-serine. Its pathway is one-carbon metabolism; tetrahydrofolate interconversion. It participates in amino-acid biosynthesis; glycine biosynthesis; glycine from L-serine: step 1/1. Functionally, catalyzes the reversible interconversion of serine and glycine with tetrahydrofolate (THF) serving as the one-carbon carrier. This reaction serves as the major source of one-carbon groups required for the biosynthesis of purines, thymidylate, methionine, and other important biomolecules. Also exhibits THF-independent aldolase activity toward beta-hydroxyamino acids, producing glycine and aldehydes, via a retro-aldol mechanism. The protein is Serine hydroxymethyltransferase 2 of Pseudomonas aeruginosa (strain ATCC 15692 / DSM 22644 / CIP 104116 / JCM 14847 / LMG 12228 / 1C / PRS 101 / PAO1).